The sequence spans 355 residues: Putative early 40.3 kDa protein (355 aa).

Functionally, this protein is required for viral late gene expression. The sequence is that of Putative early 40.3 kDa protein (DA41) from Orgyia pseudotsugata multicapsid polyhedrosis virus (OpMNPV).